A 415-amino-acid polypeptide reads, in one-letter code: 3-isopropylmalate dehydratase large subunit (415 aa).

Residues cysteine 297, cysteine 355, and cysteine 358 each contribute to the [4Fe-4S] cluster site.

It belongs to the aconitase/IPM isomerase family. LeuC type 2 subfamily. In terms of assembly, heterodimer of LeuC and LeuD. [4Fe-4S] cluster serves as cofactor.

It carries out the reaction (2R,3S)-3-isopropylmalate = (2S)-2-isopropylmalate. Its pathway is amino-acid biosynthesis; L-leucine biosynthesis; L-leucine from 3-methyl-2-oxobutanoate: step 2/4. In terms of biological role, catalyzes the isomerization between 2-isopropylmalate and 3-isopropylmalate, via the formation of 2-isopropylmaleate. The protein is 3-isopropylmalate dehydratase large subunit of Metallosphaera sedula (strain ATCC 51363 / DSM 5348 / JCM 9185 / NBRC 15509 / TH2).